The following is a 307-amino-acid chain: MSKSPKHFLDINELPLSELKSMLDASSAMKAKQKAHQPVRPLEGKTLAMIFERPSTRTRVSFDVAMRQLGGEPIMLTGAEMQLGRGETIADTARVLSRYVDAIMIRILNHDALLELAANATVPVINGLTRRSHPCQVMADLLTYQEHRGPIEGRTVAWTGDDNNVLASWAHAAERFKFQLNVATPPELAPKKAMRDWIKASGAPIMLGTDPEAAVRGADCVVTDTWVSMGDKEGEHRHNVLKPYQVNAKLMSLAKPDALFMHCLPAHRGEEVTDEVIDGPQSVVFDEAENRLHAQKGILAWCFDAVK.

Residues 55–58, Gln82, Arg106, and 133–136 each bind carbamoyl phosphate; these read STRT and HPCQ. L-ornithine-binding positions include Asn164, Asp224, and 228-229; that span reads SM. Residues 263–264 and Arg291 contribute to the carbamoyl phosphate site; that span reads CL.

This sequence belongs to the aspartate/ornithine carbamoyltransferase superfamily. OTCase family.

It localises to the cytoplasm. The catalysed reaction is carbamoyl phosphate + L-ornithine = L-citrulline + phosphate + H(+). Its pathway is amino-acid biosynthesis; L-arginine biosynthesis; L-arginine from L-ornithine and carbamoyl phosphate: step 1/3. Its function is as follows. Reversibly catalyzes the transfer of the carbamoyl group from carbamoyl phosphate (CP) to the N(epsilon) atom of ornithine (ORN) to produce L-citrulline. This Bradyrhizobium diazoefficiens (strain JCM 10833 / BCRC 13528 / IAM 13628 / NBRC 14792 / USDA 110) protein is Ornithine carbamoyltransferase.